The sequence spans 243 residues: Probable transcriptional regulatory protein BG0025 (243 aa).

The protein belongs to the TACO1 family.

The protein resides in the cytoplasm. This Borrelia garinii subsp. bavariensis (strain ATCC BAA-2496 / DSM 23469 / PBi) (Borreliella bavariensis) protein is Probable transcriptional regulatory protein BG0025.